The sequence spans 517 residues: Pentatricopeptide repeat-containing protein At5g42450, mitochondrial (517 aa).

The N-terminal 23 residues, 1–23 (MLHMILSQRVILLRKYHSSANAL), are a transit peptide targeting the mitochondrion. PPR repeat units follow at residues 57-91 (DVIS…GIRP), 92-126 (NEFT…GLAS), 127-157 (NVFV…TRDP), 158-188 (NVVS…MPER), 189-223 (SVVT…GVVI), 225-259 (NEST…LGKR), 261-291 (NVFV…LEEE), 294-329 (NIVS…NLRP), and 368-398 (ELEH…MPLD). The type E motif stretch occupies residues 403 to 478 (FWKALLGGCQ…FTGCSWIEVR (76 aa)). The tract at residues 479–509 (DQIRVFVNADKNNELKDEVYRMLALVSQHLE) is type E(+) motif.

Belongs to the PPR family. PCMP-E subfamily.

The protein localises to the mitochondrion. This chain is Pentatricopeptide repeat-containing protein At5g42450, mitochondrial (PCMP-E102), found in Arabidopsis thaliana (Mouse-ear cress).